The primary structure comprises 576 residues: Arginine--tRNA ligase (576 aa).

A 'HIGH' region motif is present at residues 122–132; the sequence is PNVAKQMHVGH.

Belongs to the class-I aminoacyl-tRNA synthetase family. In terms of assembly, monomer.

The protein resides in the cytoplasm. It catalyses the reaction tRNA(Arg) + L-arginine + ATP = L-arginyl-tRNA(Arg) + AMP + diphosphate. The protein is Arginine--tRNA ligase of Yersinia pseudotuberculosis serotype I (strain IP32953).